Reading from the N-terminus, the 361-residue chain is Histidinol-phosphate aminotransferase (361 aa).

Lys-216 carries the post-translational modification N6-(pyridoxal phosphate)lysine.

It belongs to the class-II pyridoxal-phosphate-dependent aminotransferase family. Histidinol-phosphate aminotransferase subfamily. Homodimer. Requires pyridoxal 5'-phosphate as cofactor.

The catalysed reaction is L-histidinol phosphate + 2-oxoglutarate = 3-(imidazol-4-yl)-2-oxopropyl phosphate + L-glutamate. The protein operates within amino-acid biosynthesis; L-histidine biosynthesis; L-histidine from 5-phospho-alpha-D-ribose 1-diphosphate: step 7/9. This is Histidinol-phosphate aminotransferase from Francisella philomiragia subsp. philomiragia (strain ATCC 25017 / CCUG 19701 / FSC 153 / O#319-036).